Here is a 1009-residue protein sequence, read N- to C-terminus: DENN domain-containing protein 1A (1009 aa).

In terms of domain architecture, uDENN spans 13 to 145; that stretch reads FEVYVEVAYP…HKLPIPDPGV (133 aa). Residues 162-298 form the cDENN domain; sequence ELPSIPENRN…VISSLKNRLK (137 aa). The dDENN domain occupies 300–378; it reads VSTTTGDGVA…DGRLDLLNSG (79 aa). The short motif at 381-385 is the FXDXF motif element; that stretch reads FSDVF. Residues 453–564 are disordered; it reads DIAENGCAPT…TGPVPAPPDR (112 aa). Phosphoserine is present on serine 473. Positions 477–489 are enriched in basic and acidic residues; the sequence is EAKDPKLREDRRP. Basic residues predominate over residues 500–509; the sequence is PRPHVVKRPK. Phosphothreonine is present on threonine 519. Phosphoserine occurs at positions 520, 523, 536, 538, and 546. The short motif at 569 to 578 is the Clathrin box element; the sequence is DLLEDVFSNL. Serine 592 is subject to Phosphoserine. The disordered stretch occupies residues 648 to 714; it reads IPSKPPAASP…RKTPELGIVP (67 aa). The residue at position 749 (serine 749) is a Phosphoserine. Disordered stretches follow at residues 796-831 and 928-1009; these read STLP…QPPL and RSSA…ETFE. 2 stretches are compositionally biased toward pro residues: residues 820 to 831 and 945 to 957; these read AGTPTPFPQPPL and GDPP…PPQG. A compositionally biased stretch (basic and acidic residues) spans 972–983; that stretch reads DPFEDLLQKTKQ. The span at 986 to 997 shows a compositional bias: low complexity; the sequence is SPSPALAPAPDS. Positions 999–1009 are enriched in basic and acidic residues; it reads EQLRKQWETFE.

As to quaternary structure, interacts with RAB35. Interacts with clathrin and with the adapter protein complex 2, AP-2. Interacts with ITSN1 and SH3GL2. Interacts (when phosphorylated) with YWHAE. In terms of processing, phosphorylated on serine and/or threonine in an Akt-dependent manner. Phosphorylation probably regulates the guanine nucleotide exchange factor (GEF) activity, possibly by disrupting an intramolecular interaction between the DENN domain and the C-terminus of the protein, thereby relieving the autoinhibition.

It localises to the cytoplasmic vesicle. The protein localises to the clathrin-coated vesicle membrane. The protein resides in the presynaptic cell membrane. Its activity is regulated as follows. The guanine nucleotide exchange factor (GEF) activity is autoinhibited. Autoinhibition may be the result of intramolecular interaction between the DENN domain and the C-terminus, which is disrupted upon phosphorylation. Activation is regulated by Akt activation. Functionally, guanine nucleotide exchange factor (GEF) regulating clathrin-mediated endocytosis through RAB35 activation. Promotes the exchange of GDP to GTP, converting inactive GDP-bound RAB35 into its active GTP-bound form. Regulates clathrin-mediated endocytosis of synaptic vesicles and mediates exit from early endosomes. Binds phosphatidylinositol-phosphates (PtdInsPs), with some preference for PtdIns(3)P. This is DENN domain-containing protein 1A from Homo sapiens (Human).